A 220-amino-acid chain; its full sequence is Large ribosomal subunit protein uL3 (220 aa).

A disordered region spans residues 145-169 (GPASHGSKFHRRPGSSGNRTWPGRV).

Belongs to the universal ribosomal protein uL3 family. In terms of assembly, part of the 50S ribosomal subunit. Forms a cluster with proteins L14 and L19.

In terms of biological role, one of the primary rRNA binding proteins, it binds directly near the 3'-end of the 23S rRNA, where it nucleates assembly of the 50S subunit. This is Large ribosomal subunit protein uL3 from Bdellovibrio bacteriovorus (strain ATCC 15356 / DSM 50701 / NCIMB 9529 / HD100).